Here is a 450-residue protein sequence, read N- to C-terminus: Glutathione reductase (450 aa).

FAD-binding residues include serine 14, glycine 15, glutamate 34, threonine 41, cysteine 42, lysine 50, and alanine 115. Serine 14 is a glutathione binding site. Cysteine 42 and cysteine 47 are disulfide-bonded. NADP(+) is bound by residues alanine 175, isoleucine 178, glutamate 181, arginine 198, arginine 204, and glycine 262. Aspartate 303 provides a ligand contact to FAD. Aspartate 309 lines the NADP(+) pocket. Threonine 311 contributes to the FAD binding site. Arginine 319 is a binding site for glutathione. Valine 342 lines the NADP(+) pocket. Residue histidine 439 coordinates FAD. The active-site Proton acceptor is histidine 439.

This sequence belongs to the class-I pyridine nucleotide-disulfide oxidoreductase family. As to quaternary structure, homodimer. It depends on FAD as a cofactor.

It is found in the cytoplasm. The enzyme catalyses 2 glutathione + NADP(+) = glutathione disulfide + NADPH + H(+). Its function is as follows. Catalyzes the reduction of glutathione disulfide (GSSG) to reduced glutathione (GSH). Constitutes the major mechanism to maintain a high GSH:GSSG ratio in the cytosol. The polypeptide is Glutathione reductase (gor) (Streptococcus thermophilus).